The sequence spans 503 residues: 2-(3-amino-3-carboxypropyl)histidine synthase subunit 2 (503 aa).

Residues Cys93, Cys114, and Cys334 each coordinate [4Fe-4S] cluster. The disordered stretch occupies residues 464–503 (GLDSVDEGEGPSKLYEGQSGIAKGYVGEGSKEKIQRDFGK). Residues 492 to 503 (GSKEKIQRDFGK) are compositionally biased toward basic and acidic residues.

This sequence belongs to the DPH1/DPH2 family. DPH2 subfamily. Component of the 2-(3-amino-3-carboxypropyl)histidine synthase complex composed of dph1, dph2, dph3 and a NADH-dependent reductase, predominantly cbr1. It depends on [4Fe-4S] cluster as a cofactor.

Its subcellular location is the cytoplasm. It participates in protein modification; peptidyl-diphthamide biosynthesis. Required for the first step of diphthamide biosynthesis, a post-translational modification of histidine which occurs in elongation factor 2. Dph1 and dph2 transfer a 3-amino-3-carboxypropyl (ACP) group from S-adenosyl-L-methionine (SAM) to a histidine residue, the reaction is assisted by a reduction system comprising dph3 and a NADH-dependent reductase, predominantly cbr1. Facilitates the reduction of the catalytic iron-sulfur cluster found in the dph1 subunit. The protein is 2-(3-amino-3-carboxypropyl)histidine synthase subunit 2 of Schizosaccharomyces pombe (strain 972 / ATCC 24843) (Fission yeast).